We begin with the raw amino-acid sequence, 422 residues long: S-adenosylmethionine synthase (422 aa).

Position 15 (histidine 15) interacts with ATP. A Mg(2+)-binding site is contributed by aspartate 17. Glutamate 43 is a binding site for K(+). Glutamate 56 and glutamine 99 together coordinate L-methionine. A flexible loop region spans residues 99 to 109 (QSPDISRGVTE). Residues 166–168 (DGK), 232–233 (RF), aspartate 241, 247–248 (RK), alanine 264, and lysine 268 contribute to the ATP site. Residue aspartate 241 participates in L-methionine binding. Lysine 272 provides a ligand contact to L-methionine. Positions 390–422 (AVPATTNGAGSKNGSGSKKEPKRKGKKETGAQA) are disordered.

This sequence belongs to the AdoMet synthase family. As to quaternary structure, homotetramer; dimer of dimers. It depends on Mg(2+) as a cofactor. K(+) serves as cofactor.

Its subcellular location is the cytoplasm. It carries out the reaction L-methionine + ATP + H2O = S-adenosyl-L-methionine + phosphate + diphosphate. Its pathway is amino-acid biosynthesis; S-adenosyl-L-methionine biosynthesis; S-adenosyl-L-methionine from L-methionine: step 1/1. In terms of biological role, catalyzes the formation of S-adenosylmethionine (AdoMet) from methionine and ATP. The overall synthetic reaction is composed of two sequential steps, AdoMet formation and the subsequent tripolyphosphate hydrolysis which occurs prior to release of AdoMet from the enzyme. This is S-adenosylmethionine synthase from Sorangium cellulosum (strain So ce56) (Polyangium cellulosum (strain So ce56)).